The primary structure comprises 81 residues: RNA-binding protein Hfq (81 aa).

Residues 10 to 69 (DPFLNTLRREHVPVSIYLVNGIKLQGQIESFDQYVVLLRNTVTQMVYKHAISTIVPGRAV) form the Sm domain.

This sequence belongs to the Hfq family. Homohexamer.

Its function is as follows. RNA chaperone that binds small regulatory RNA (sRNAs) and mRNAs to facilitate mRNA translational regulation in response to envelope stress, environmental stress and changes in metabolite concentrations. Also binds with high specificity to tRNAs. The chain is RNA-binding protein Hfq from Variovorax paradoxus (strain S110).